Consider the following 191-residue polypeptide: Protein GrpE (191 aa).

A disordered region spans residues 1 to 22 (MKDKHNQEHDHLSQEEPESCEK).

It belongs to the GrpE family. Homodimer.

It localises to the cytoplasm. Participates actively in the response to hyperosmotic and heat shock by preventing the aggregation of stress-denatured proteins, in association with DnaK and GrpE. It is the nucleotide exchange factor for DnaK and may function as a thermosensor. Unfolded proteins bind initially to DnaJ; upon interaction with the DnaJ-bound protein, DnaK hydrolyzes its bound ATP, resulting in the formation of a stable complex. GrpE releases ADP from DnaK; ATP binding to DnaK triggers the release of the substrate protein, thus completing the reaction cycle. Several rounds of ATP-dependent interactions between DnaJ, DnaK and GrpE are required for fully efficient folding. The polypeptide is Protein GrpE (Helicobacter pylori (strain Shi470)).